Consider the following 118-residue polypeptide: Large ribosomal subunit protein bL20 (118 aa).

It belongs to the bacterial ribosomal protein bL20 family.

Its function is as follows. Binds directly to 23S ribosomal RNA and is necessary for the in vitro assembly process of the 50S ribosomal subunit. It is not involved in the protein synthesizing functions of that subunit. The polypeptide is Large ribosomal subunit protein bL20 (Klebsiella pneumoniae (strain 342)).